Reading from the N-terminus, the 349-residue chain is Estrogen receptor (349 aa).

Positions 1 to 5 form a DNA-binding region, nuclear receptor; the sequence is YEVGM. A disordered region spans residues 1-38; it reads YEVGMMKGGIRKDRRGGRMLKHKRQREENDSRNAGALT. The segment covering 12–24 has biased composition (basic residues); the sequence is KDRRGGRMLKHKR. An NR LBD domain is found at 65-301; that stretch reads TADQMVSALL…DLLLEMLDAH (237 aa). The segment at 306-327 is disordered; it reads PAAKGSPPSEDDPLNQLAVPSP.

Belongs to the nuclear hormone receptor family. NR3 subfamily. Binds DNA as a homodimer. Can form a heterodimer with ER-beta.

The protein localises to the nucleus. Its function is as follows. The steroid hormones and their receptors are involved in the regulation of eukaryotic gene expression and affect cellular proliferation and differentiation in target tissues. This Anolis carolinensis (Green anole) protein is Estrogen receptor (ESR1).